The following is a 211-amino-acid chain: Small ribosomal subunit protein uS3 (211 aa).

One can recognise a KH type-2 domain in the interval 38–106 (LRNFLKKRLF…EIYLNIQEVR (69 aa)).

This sequence belongs to the universal ribosomal protein uS3 family. In terms of assembly, part of the 30S ribosomal subunit. Forms a tight complex with proteins S10 and S14.

Functionally, binds the lower part of the 30S subunit head. Binds mRNA in the 70S ribosome, positioning it for translation. This chain is Small ribosomal subunit protein uS3, found in Geobacter metallireducens (strain ATCC 53774 / DSM 7210 / GS-15).